The primary structure comprises 378 residues: GTP cyclohydrolase-2 (378 aa).

Positions 1–180 (MEEVSSHVKS…IKDMIEFRIK (180 aa)) are DHBP synthase-like. The GTP cyclohydrolase II stretch occupies residues 181 to 378 (SEKIVERVIE…KMGHLICFND (198 aa)). GTP is bound at residue 229 to 233 (RIHSE). Cys-234, Cys-245, and Cys-247 together coordinate Zn(2+). GTP-binding positions include Gln-250, 273–275 (EGR), and Thr-295. The Proton acceptor role is filled by Asp-307. The active-site Nucleophile is the Arg-309. Residues Thr-330 and Lys-335 each coordinate GTP.

The protein in the N-terminal section; belongs to the DHBP synthase family. In the C-terminal section; belongs to the GTP cyclohydrolase II family. Zn(2+) serves as cofactor.

The catalysed reaction is GTP + 4 H2O = 2,5-diamino-6-hydroxy-4-(5-phosphoribosylamino)-pyrimidine + formate + 2 phosphate + 3 H(+). Its pathway is cofactor biosynthesis; riboflavin biosynthesis; 5-amino-6-(D-ribitylamino)uracil from GTP: step 1/4. Functionally, catalyzes the conversion of GTP to 2,5-diamino-6-ribosylamino-4(3H)-pyrimidinone 5'-phosphate (DARP), formate and pyrophosphate. The protein is GTP cyclohydrolase-2 (ribA) of Archaeoglobus fulgidus (strain ATCC 49558 / DSM 4304 / JCM 9628 / NBRC 100126 / VC-16).